The following is an 81-amino-acid chain: uncharacterized protein (81 aa).

The N-terminal stretch at 1–16 (MNRLTFYGLCLSGAVG) is a signal peptide. The tract at residues 55–81 (TIDPHHNHHDDHHDSHGHGHGKIKGHH) is disordered. Residues 57 to 71 (DPHHNHHDDHHDSHG) show a composition bias toward basic and acidic residues. Over residues 72–81 (HGHGKIKGHH) the composition is skewed to basic residues.

The protein localises to the secreted. This is an uncharacterized protein from Dictyostelium discoideum (Social amoeba).